Consider the following 127-residue polypeptide: S-adenosylmethionine decarboxylase proenzyme 2 (127 aa).

The active-site Schiff-base intermediate with substrate; via pyruvic acid is serine 63. Serine 63 carries the post-translational modification Pyruvic acid (Ser); by autocatalysis. Histidine 68 acts as the Proton acceptor; for processing activity in catalysis. Cysteine 83 acts as the Proton donor; for catalytic activity in catalysis.

This sequence belongs to the prokaryotic AdoMetDC family. Type 1 subfamily. Heterotetramer of two alpha and two beta chains arranged as a dimer of alpha/beta heterodimers. It depends on pyruvate as a cofactor. Is synthesized initially as an inactive proenzyme. Formation of the active enzyme involves a self-maturation process in which the active site pyruvoyl group is generated from an internal serine residue via an autocatalytic post-translational modification. Two non-identical subunits are generated from the proenzyme in this reaction, and the pyruvate is formed at the N-terminus of the alpha chain, which is derived from the carboxyl end of the proenzyme. The post-translation cleavage follows an unusual pathway, termed non-hydrolytic serinolysis, in which the side chain hydroxyl group of the serine supplies its oxygen atom to form the C-terminus of the beta chain, while the remainder of the serine residue undergoes an oxidative deamination to produce ammonia and the pyruvoyl group blocking the N-terminus of the alpha chain.

The catalysed reaction is S-adenosyl-L-methionine + H(+) = S-adenosyl 3-(methylsulfanyl)propylamine + CO2. It functions in the pathway amine and polyamine biosynthesis; S-adenosylmethioninamine biosynthesis; S-adenosylmethioninamine from S-adenosyl-L-methionine: step 1/1. Functionally, catalyzes the decarboxylation of S-adenosylmethionine to S-adenosylmethioninamine (dcAdoMet), the propylamine donor required for the synthesis of the polyamines spermine and spermidine from the diamine putrescine. This Halalkalibacterium halodurans (strain ATCC BAA-125 / DSM 18197 / FERM 7344 / JCM 9153 / C-125) (Bacillus halodurans) protein is S-adenosylmethionine decarboxylase proenzyme 2.